Here is a 137-residue protein sequence, read N- to C-terminus: Small ribosomal subunit protein uS12 (137 aa).

Disordered stretches follow at residues 1 to 21 and 34 to 57; these read MPTINQLVRKPRKSKIEKSDS and VHTKIAAPQKRGVATRVGTMTPKK. Asp102 carries the 3-methylthioaspartic acid modification.

The protein belongs to the universal ribosomal protein uS12 family. As to quaternary structure, part of the 30S ribosomal subunit. Contacts proteins S8 and S17. May interact with IF1 in the 30S initiation complex.

Functionally, with S4 and S5 plays an important role in translational accuracy. In terms of biological role, interacts with and stabilizes bases of the 16S rRNA that are involved in tRNA selection in the A site and with the mRNA backbone. Located at the interface of the 30S and 50S subunits, it traverses the body of the 30S subunit contacting proteins on the other side and probably holding the rRNA structure together. The combined cluster of proteins S8, S12 and S17 appears to hold together the shoulder and platform of the 30S subunit. The protein is Small ribosomal subunit protein uS12 of Streptococcus uberis (strain ATCC BAA-854 / 0140J).